Reading from the N-terminus, the 753-residue chain is Elongin-A2 (753 aa).

Residues 5–80 form the TFIIS N-terminal domain; it reads STTLHAVEKL…ARWKKLVLVD (76 aa). Disordered stretches follow at residues 80–245, 261–453, and 477–497; these read DRNT…DWHS, ETPR…GPKT, and LSDS…SPKF. Composition is skewed to basic and acidic residues over residues 147–157 and 271–285; these read HSREPRAERKC and ARDR…DKEG. Residues 306–317 are compositionally biased toward basic residues; it reads KRPQHSHSNKKR. Positions 333–348 are enriched in basic and acidic residues; sequence SPEEKEQLSNDRETQE. Residues 366-377 show a composition bias toward acidic residues; it reads EVEEVDMAEEFE. The span at 409-428 shows a compositional bias: basic and acidic residues; the sequence is DKQRKANESKGTRESWDSAK. An activation domain region spans residues 500–659; sequence EAAFPGRRVN…TPYDTSRRQE (160 aa). The tract at residues 528–537 is BC-box; the sequence is TLRQQCAQVL. Residues 528 to 537 form an interacting with Elongin BC complex region; that stretch reads TLRQQCAQVL. The tract at residues 650 to 735 is disordered; that stretch reads TPYDTSRRQE…KTRKQAAKKV (86 aa). A compositionally biased stretch (basic and acidic residues) spans 654-663; sequence TSRRQEKSAG. The span at 680–700 shows a compositional bias: low complexity; it reads GSSHTPSSQSSSGGGRDSSSS.

Heterotrimer of an A (ELOA, ELOA2 or ELOA3P), ELOB and ELOC subunit. In terms of tissue distribution, specifically expressed in testis.

The protein resides in the nucleus. In terms of biological role, SIII, also known as elongin, is a general transcription elongation factor that increases the RNA polymerase II transcription elongation past template-encoded arresting sites. Subunit A2 is transcriptionally active but its transcription activity is not enhanced by binding to the dimeric complex of the SIII regulatory subunits B and C (elongin BC complex). The protein is Elongin-A2 of Homo sapiens (Human).